Reading from the N-terminus, the 90-residue chain is uncharacterized protein (90 aa).

2 helical membrane passes run 23-43 (ITTI…VGLF) and 48-68 (VTLL…IIGF).

The protein localises to the cell membrane. This is an uncharacterized protein from Rickettsia prowazekii (strain Madrid E).